The primary structure comprises 693 residues: Sulfite reductase 1 [ferredoxin], chloroplastic (693 aa).

The N-terminal 62 residues, 1-62 (MTTSFGAAIN…PSSIVRAVST (62 aa)), are a transit peptide targeting the chloroplast. Positions 502, 508, 548, and 552 each coordinate [4Fe-4S] cluster. Siroheme is bound at residue cysteine 552.

This sequence belongs to the nitrite and sulfite reductase 4Fe-4S domain family. As to quaternary structure, monomer. Interacts with ferredoxin. Requires siroheme as cofactor. The cofactor is [4Fe-4S] cluster. Phosphorylated; this phosphorylation reduces DNA-binding. As to expression, expressed in leaves, stems, roots and petals.

It localises to the plastid. The protein localises to the chloroplast stroma. Its subcellular location is the chloroplast nucleoid. It is found in the plastid stroma. It catalyses the reaction hydrogen sulfide + 6 oxidized [2Fe-2S]-[ferredoxin] + 3 H2O = sulfite + 6 reduced [2Fe-2S]-[ferredoxin] + 7 H(+). Functionally, essential protein with sulfite reductase activity required in assimilatory sulfate reduction pathway during both primary and secondary metabolism and thus involved in development and growth. In terms of biological role, DNA-binding protein that binds to both double-stranded and single-stranded DNA without significant sequence specificity to reversibly repress the transcriptional activity of chloroplast nucleoids by promoting DNA compaction and possibly regulate DNA replication. The chain is Sulfite reductase 1 [ferredoxin], chloroplastic (SIR1) from Nicotiana tabacum (Common tobacco).